The primary structure comprises 448 residues: Trigger factor (448 aa).

A PPIase FKBP-type domain is found at 167–253 (GSIVRVDFVE…VKDIKRRDIP (87 aa)).

It belongs to the FKBP-type PPIase family. Tig subfamily.

Its subcellular location is the cytoplasm. It carries out the reaction [protein]-peptidylproline (omega=180) = [protein]-peptidylproline (omega=0). In terms of biological role, involved in protein export. Acts as a chaperone by maintaining the newly synthesized protein in an open conformation. Functions as a peptidyl-prolyl cis-trans isomerase. In Borrelia recurrentis (strain A1), this protein is Trigger factor.